A 93-amino-acid polypeptide reads, in one-letter code: GWPAYPGSNGIRSSVCQKKLGCGSKNLASLGVCKAFCPGRKRFWQKCGKNGSSGKGSRICNPVPAHAVEKAGKGLIKVTDMAVAAIAKYAGKK.

3 disulfides stabilise this stretch: C16/C37, C22/C33, and C47/C60.

Belongs to the worm cytolysin family. In terms of tissue distribution, localized within the skin and proboscis and are most readily isolated from body mucus secretions.

It is found in the secreted. Functionally, cytolysin that shows hemolytic activity (on bovine erythrocytes, HC(50)=5.75 mg/ml). This hemolytic activity is completely inhibited by small unilamelar vesicles composed of PC/PG, PC/PI and PC/PS in 1:1 molar ratios (with at least 100 mg/ml concentration). The polypeptide is Parbolysin P3 (Parborlasia corrugatus (Antarctic nemertean worm)).